We begin with the raw amino-acid sequence, 216 residues long: Pyrophosphatase PpaX (216 aa).

The Nucleophile role is filled by aspartate 9.

Belongs to the HAD-like hydrolase superfamily. PpaX family. Requires Mg(2+) as cofactor.

It carries out the reaction diphosphate + H2O = 2 phosphate + H(+). Its function is as follows. Hydrolyzes pyrophosphate formed during P-Ser-HPr dephosphorylation by HPrK/P. Might play a role in controlling the intracellular pyrophosphate pool. The protein is Pyrophosphatase PpaX of Bacillus anthracis (strain A0248).